The sequence spans 294 residues: tRNA dimethylallyltransferase (294 aa).

11 to 18 provides a ligand contact to ATP; the sequence is GPTAVGKT. 13 to 18 lines the substrate pocket; that stretch reads TAVGKT. Positions 36-39 are interaction with substrate tRNA; it reads DSQQ.

This sequence belongs to the IPP transferase family. As to quaternary structure, monomer. The cofactor is Mg(2+).

The catalysed reaction is adenosine(37) in tRNA + dimethylallyl diphosphate = N(6)-dimethylallyladenosine(37) in tRNA + diphosphate. Its function is as follows. Catalyzes the transfer of a dimethylallyl group onto the adenine at position 37 in tRNAs that read codons beginning with uridine, leading to the formation of N6-(dimethylallyl)adenosine (i(6)A). In Lactococcus lactis subsp. lactis (strain IL1403) (Streptococcus lactis), this protein is tRNA dimethylallyltransferase.